Consider the following 128-residue polypeptide: Small ribosomal subunit protein uS12 (128 aa).

A disordered region spans residues 1–29; sequence MPTINQLIRKGREPKERKSKSPALMGNPQ. Residue Asp-89 is modified to 3-methylthioaspartic acid. The segment at 106 to 128 is disordered; sequence GVEGRRQGRSKYGAKRPKEGGKK.

Belongs to the universal ribosomal protein uS12 family. As to quaternary structure, part of the 30S ribosomal subunit. Contacts proteins S8 and S17. May interact with IF1 in the 30S initiation complex.

With S4 and S5 plays an important role in translational accuracy. Its function is as follows. Interacts with and stabilizes bases of the 16S rRNA that are involved in tRNA selection in the A site and with the mRNA backbone. Located at the interface of the 30S and 50S subunits, it traverses the body of the 30S subunit contacting proteins on the other side and probably holding the rRNA structure together. The combined cluster of proteins S8, S12 and S17 appears to hold together the shoulder and platform of the 30S subunit. In Dictyoglomus turgidum (strain DSM 6724 / Z-1310), this protein is Small ribosomal subunit protein uS12.